The chain runs to 809 residues: Lon protease (809 aa).

Residues 42 to 242 form the Lon N-terminal domain; that stretch reads LVIYPLGGRP…KVLTLLKKEL (201 aa). Residue 395 to 402 participates in ATP binding; sequence GPPGVGKT. Residues 629–809 form the Lon proteolytic domain; it reads LTGVGIVTGL…YAEVAKLVFG (181 aa). Active-site residues include Ser-716 and Lys-759.

This sequence belongs to the peptidase S16 family. As to quaternary structure, homohexamer. Organized in a ring with a central cavity.

The protein localises to the cytoplasm. It carries out the reaction Hydrolysis of proteins in presence of ATP.. Functionally, ATP-dependent serine protease that mediates the selective degradation of mutant and abnormal proteins as well as certain short-lived regulatory proteins. Required for cellular homeostasis and for survival from DNA damage and developmental changes induced by stress. Degrades polypeptides processively to yield small peptide fragments that are 5 to 10 amino acids long. Binds to DNA in a double-stranded, site-specific manner. The sequence is that of Lon protease from Magnetococcus marinus (strain ATCC BAA-1437 / JCM 17883 / MC-1).